We begin with the raw amino-acid sequence, 447 residues long: UPF0210 protein Lreu_0940 (447 aa).

It belongs to the UPF0210 family. Homodimer.

The polypeptide is UPF0210 protein Lreu_0940 (Limosilactobacillus reuteri (strain DSM 20016) (Lactobacillus reuteri)).